A 401-amino-acid polypeptide reads, in one-letter code: Imidazolonepropionase (401 aa).

Fe(3+)-binding residues include His-66 and His-68. Zn(2+)-binding residues include His-66 and His-68. Residues Arg-75, Tyr-138, and His-171 each coordinate 4-imidazolone-5-propanoate. Residue Tyr-138 coordinates N-formimidoyl-L-glutamate. His-236 is a Fe(3+) binding site. His-236 provides a ligand contact to Zn(2+). Gln-239 serves as a coordination point for 4-imidazolone-5-propanoate. Residue Asp-311 coordinates Fe(3+). Residue Asp-311 coordinates Zn(2+). The N-formimidoyl-L-glutamate site is built by Asn-313 and Gly-315. Residue Thr-316 coordinates 4-imidazolone-5-propanoate.

It belongs to the metallo-dependent hydrolases superfamily. HutI family. Requires Zn(2+) as cofactor. Fe(3+) is required as a cofactor.

The protein resides in the cytoplasm. It carries out the reaction 4-imidazolone-5-propanoate + H2O = N-formimidoyl-L-glutamate. The protein operates within amino-acid degradation; L-histidine degradation into L-glutamate; N-formimidoyl-L-glutamate from L-histidine: step 3/3. In terms of biological role, catalyzes the hydrolytic cleavage of the carbon-nitrogen bond in imidazolone-5-propanoate to yield N-formimidoyl-L-glutamate. It is the third step in the universal histidine degradation pathway. The sequence is that of Imidazolonepropionase from Acinetobacter baumannii (strain AB307-0294).